A 339-amino-acid chain; its full sequence is Glycerol-3-phosphate dehydrogenase [NAD(P)+] (339 aa).

Residues S15, Y16, H36, and K110 each coordinate NADPH. 3 residues coordinate sn-glycerol 3-phosphate: K110, G139, and T141. A143 contacts NADPH. Sn-glycerol 3-phosphate is bound by residues K195, D248, S258, R259, and N260. The active-site Proton acceptor is K195. R259 is a binding site for NADPH. NADPH contacts are provided by V283 and E285.

Belongs to the NAD-dependent glycerol-3-phosphate dehydrogenase family.

It localises to the cytoplasm. It catalyses the reaction sn-glycerol 3-phosphate + NAD(+) = dihydroxyacetone phosphate + NADH + H(+). It carries out the reaction sn-glycerol 3-phosphate + NADP(+) = dihydroxyacetone phosphate + NADPH + H(+). The protein operates within membrane lipid metabolism; glycerophospholipid metabolism. Its function is as follows. Catalyzes the reduction of the glycolytic intermediate dihydroxyacetone phosphate (DHAP) to sn-glycerol 3-phosphate (G3P), the key precursor for phospholipid synthesis. The protein is Glycerol-3-phosphate dehydrogenase [NAD(P)+] of Escherichia fergusonii (strain ATCC 35469 / DSM 13698 / CCUG 18766 / IAM 14443 / JCM 21226 / LMG 7866 / NBRC 102419 / NCTC 12128 / CDC 0568-73).